We begin with the raw amino-acid sequence, 127 residues long: Protein LLP homolog (127 aa).

Over residues 1-21 the composition is skewed to basic residues; that stretch reads MAKSLRSKWKRKMRAEKRKKN. The disordered stretch occupies residues 1–24; the sequence is MAKSLRSKWKRKMRAEKRKKNAPK. Glycyl lysine isopeptide (Lys-Gly) (interchain with G-Cter in SUMO2) cross-links involve residues Lys-65 and Lys-72. Positions 98 to 120 are enriched in basic residues; sequence RQRKRLKAKRERKKGKSKVKAMK. The tract at residues 98–127 is disordered; sequence RQRKRLKAKRERKKGKSKVKAMKAAKGLTW.

It belongs to the learning-associated protein family. As to quaternary structure, interacts with CTCF, MYO1C and with the transcriptional machinery, including RNA polymerase II and TBP.

It is found in the nucleus. The protein resides in the nucleolus. The protein localises to the chromosome. In hippocampal neurons, regulates dendritic and spine growth and synaptic transmission. In Bos taurus (Bovine), this protein is Protein LLP homolog (LLPH).